The primary structure comprises 497 residues: Serine/threonine protein phosphatase 2A 57 kDa regulatory subunit B' epsilon isoform (497 aa).

The disordered stretch occupies residues 12–71; the sequence is KFNKSDQHHQDNNNNNNNTSTNTVVRGSRTTTPAPSSVSNGESQTTAQSPSQTPNHPMFT. A compositionally biased stretch (low complexity) spans 23–34; it reads NNNNNNNTSTNT. Residues 35–71 are compositionally biased toward polar residues; sequence VVRGSRTTTPAPSSVSNGESQTTAQSPSQTPNHPMFT.

The protein belongs to the phosphatase 2A regulatory subunit B56 family. In terms of assembly, PP2A consists of a common heteromeric enzyme, composed of a catalytic subunit (subunits C), a constant regulatory subunit (subunit A), and a variety of regulatory subunits such as subunits B (the R2/B/PR55/B55, R3/B''/PR72/PR130/PR59 and R5/B'/B56 families). As to expression, expressed ubiquitously.

The protein localises to the cytoplasm. The B regulatory subunit may modulate substrate selectivity and catalytic activity, and may also direct the localization of the catalytic enzyme to a particular subcellular compartment. The polypeptide is Serine/threonine protein phosphatase 2A 57 kDa regulatory subunit B' epsilon isoform (B'EPSILON) (Arabidopsis thaliana (Mouse-ear cress)).